The following is a 346-amino-acid chain: MISEAPPFWWRKADWRAWLLAPLSFLYGRIAGHRMAHARRASVSVPVICVGNFTVGGAGKTPTALTLARAAKAKGLKPGFLSRGYGGSLDVTTVVDPLHHRAVAVGDEPLLLAQEALTVISRRRLDGARRLVAEGADLIIMDDGFQSARLAIDYALLVIDATRGLGNGHIVPAGPVRAPIRQQLRSATALLKVGGGNAADGIVRMAARAAKPYFTASLKVRGDDRLSGIKVLAFAGIADPAKFFRTVESRGAEIAVAKTFGDHEHLTEEEIDDILTTAERQDLLIVTTSKDFVRLSGHHGKAEQLAQKARVIEVDIVFEDHLAPGLIIDRAIIACRDRRLKELKTS.

54–61 is a binding site for ATP; it reads TVGGAGKT.

The protein belongs to the LpxK family.

The catalysed reaction is a lipid A disaccharide + ATP = a lipid IVA + ADP + H(+). The protein operates within glycolipid biosynthesis; lipid IV(A) biosynthesis; lipid IV(A) from (3R)-3-hydroxytetradecanoyl-[acyl-carrier-protein] and UDP-N-acetyl-alpha-D-glucosamine: step 6/6. Its function is as follows. Transfers the gamma-phosphate of ATP to the 4'-position of a tetraacyldisaccharide 1-phosphate intermediate (termed DS-1-P) to form tetraacyldisaccharide 1,4'-bis-phosphate (lipid IVA). The polypeptide is Tetraacyldisaccharide 4'-kinase (Rhizobium etli (strain ATCC 51251 / DSM 11541 / JCM 21823 / NBRC 15573 / CFN 42)).